Here is a 229-residue protein sequence, read N- to C-terminus: Prolactin (229 aa).

The signal sequence occupies residues 1-30 (MDNKGWSLKGSLLFLLLLLSDLLLCKSVAS). An intrachain disulfide couples cysteine 34 to cysteine 41. Serine 56 carries the phosphoserine modification. Asparagine 61 carries an N-linked (GlcNAc...) asparagine glycan. Phosphoserine occurs at positions 64 and 120. Cystine bridges form between cysteine 88-cysteine 204 and cysteine 221-cysteine 229.

This sequence belongs to the somatotropin/prolactin family. Interacts with PRLR.

The protein resides in the secreted. In terms of biological role, prolactin acts primarily on the mammary gland by promoting lactation. This Felis catus (Cat) protein is Prolactin (PRL).